Reading from the N-terminus, the 56-residue chain is Small ribosomal subunit protein uS14 (56 aa).

4 residues coordinate Zn(2+): C21, C24, C39, and C42.

The protein belongs to the universal ribosomal protein uS14 family. Component of the 40S small ribosomal subunit. It depends on Zn(2+) as a cofactor.

It is found in the cytoplasm. Its subcellular location is the cytosol. The protein localises to the rough endoplasmic reticulum. This is Small ribosomal subunit protein uS14 (RpS29) from Lysiphlebus testaceipes (Greenbugs aphid parastoid).